The sequence spans 218 residues: MTDLSELNFDPSGLIPVVTQDARSGAVLMQAYADRAAVERTLDTREATYYSRSRGEQWVKGQTSGHTQRVVSVHVDCDGDSLLYRVEQTGPACHTGEYSCFYRPLLEDDAPDTGLDGTLERVYATITERLATLPEGSYVARLHAGGLDRVLKKISEEAGEVLLAAKNADRAELATETADLLFHTLFALAEVGVSPADVAAVLQGREGKSGLKGPKEVG.

The interval M1–T118 is phosphoribosyl-AMP cyclohydrolase. The segment at L119 to G218 is phosphoribosyl-ATP pyrophosphohydrolase.

It in the N-terminal section; belongs to the PRA-CH family. This sequence in the C-terminal section; belongs to the PRA-PH family.

The protein localises to the cytoplasm. The catalysed reaction is 1-(5-phospho-beta-D-ribosyl)-ATP + H2O = 1-(5-phospho-beta-D-ribosyl)-5'-AMP + diphosphate + H(+). The enzyme catalyses 1-(5-phospho-beta-D-ribosyl)-5'-AMP + H2O = 1-(5-phospho-beta-D-ribosyl)-5-[(5-phospho-beta-D-ribosylamino)methylideneamino]imidazole-4-carboxamide. Its pathway is amino-acid biosynthesis; L-histidine biosynthesis; L-histidine from 5-phospho-alpha-D-ribose 1-diphosphate: step 2/9. It functions in the pathway amino-acid biosynthesis; L-histidine biosynthesis; L-histidine from 5-phospho-alpha-D-ribose 1-diphosphate: step 3/9. The protein is Histidine biosynthesis bifunctional protein HisIE (hisI) of Deinococcus radiodurans (strain ATCC 13939 / DSM 20539 / JCM 16871 / CCUG 27074 / LMG 4051 / NBRC 15346 / NCIMB 9279 / VKM B-1422 / R1).